The primary structure comprises 374 residues: Pyruvate dehydrogenase E1 component subunit beta-1, mitochondrial (374 aa).

A mitochondrion-targeting transit peptide spans 1–34 (MLGIARRRLGSGCALGQLMQALRPAAAAAAARTY). Glu97 lines the thiamine diphosphate pocket. K(+) contacts are provided by Ile150, Ala198, Ile199, and Asp201.

As to quaternary structure, tetramer of 2 alpha and 2 beta subunits. The cofactor is thiamine diphosphate.

It localises to the mitochondrion matrix. The enzyme catalyses N(6)-[(R)-lipoyl]-L-lysyl-[protein] + pyruvate + H(+) = N(6)-[(R)-S(8)-acetyldihydrolipoyl]-L-lysyl-[protein] + CO2. Functionally, the pyruvate dehydrogenase complex catalyzes the overall conversion of pyruvate to acetyl-CoA and CO(2). It contains multiple copies of three enzymatic components: pyruvate dehydrogenase (E1), dihydrolipoamide acetyltransferase (E2) and lipoamide dehydrogenase (E3). This chain is Pyruvate dehydrogenase E1 component subunit beta-1, mitochondrial, found in Oryza sativa subsp. japonica (Rice).